A 502-amino-acid polypeptide reads, in one-letter code: Glycerol kinase (502 aa).

Thr-14 lines the ADP pocket. The ATP site is built by Thr-14, Thr-15, and Ser-16. Thr-14 serves as a coordination point for sn-glycerol 3-phosphate. An ADP-binding site is contributed by Arg-18. Residues Arg-84, Glu-85, Tyr-136, and Asp-246 each coordinate sn-glycerol 3-phosphate. The glycerol site is built by Arg-84, Glu-85, Tyr-136, Asp-246, and Gln-247. Thr-268 and Gly-311 together coordinate ADP. Positions 268, 311, 315, and 412 each coordinate ATP. Gly-412 and Asn-416 together coordinate ADP.

The protein belongs to the FGGY kinase family. Homotetramer and homodimer (in equilibrium). Heterodimer with EIIA-Glc. Binds 1 zinc ion per glycerol kinase EIIA-Glc dimer. The zinc ion is important for dimerization.

It carries out the reaction glycerol + ATP = sn-glycerol 3-phosphate + ADP + H(+). The protein operates within polyol metabolism; glycerol degradation via glycerol kinase pathway; sn-glycerol 3-phosphate from glycerol: step 1/1. Activity of this regulatory enzyme is affected by several metabolites. Allosterically and non-competitively inhibited by fructose 1,6-bisphosphate (FBP) and unphosphorylated phosphocarrier protein EIIA-Glc (III-Glc), an integral component of the bacterial phosphotransferase (PTS) system. Functionally, key enzyme in the regulation of glycerol uptake and metabolism. Catalyzes the phosphorylation of glycerol to yield sn-glycerol 3-phosphate. This Shigella flexneri protein is Glycerol kinase.